A 248-amino-acid polypeptide reads, in one-letter code: UPF0736 protein BCG9842_B4111 (248 aa).

The protein belongs to the UPF0736 family.

This is UPF0736 protein BCG9842_B4111 from Bacillus cereus (strain G9842).